Consider the following 436-residue polypeptide: Peptidase B (436 aa).

Lysine 201 and aspartate 206 together coordinate Mn(2+). Lysine 213 is an active-site residue. Positions 224, 283, and 285 each coordinate Mn(2+). The active site involves arginine 287.

It belongs to the peptidase M17 family. Homohexamer. The cofactor is Mn(2+).

It is found in the cytoplasm. It carries out the reaction Release of an N-terminal amino acid, Xaa, from a peptide or arylamide. Xaa is preferably Glu or Asp but may be other amino acids, including Leu, Met, His, Cys and Gln.. In terms of biological role, probably plays an important role in intracellular peptide degradation. In Pectobacterium carotovorum subsp. carotovorum (strain PC1), this protein is Peptidase B.